The sequence spans 307 residues: Transmembrane and coiled-coil domain-containing protein 5B (307 aa).

A coiled-coil region spans residues 17 to 207; the sequence is FASSLEAVKQ…LEKQISKAQD (191 aa). Residues 243–265 traverse the membrane as a helical segment; it reads YFQYLTFMVLVFIRLLAYVIFHL.

It belongs to the TMCO5 family.

It localises to the membrane. This chain is Transmembrane and coiled-coil domain-containing protein 5B (TMCO5B), found in Homo sapiens (Human).